The sequence spans 532 residues: KICSTOR complex protein ITFG2 (532 aa).

Residues 19-48 (FPHAICLGDVDNDTLNELVVGDTSGKLSVY) form an FG-GAP 1; atypical repeat. Residue S104 is modified to Phosphoserine. The stretch at 126–155 (NTKVMLISDIDGDGRCELVVGYTDRVVRAF) is one FG-GAP 2; atypical repeat. Residues 248–271 (PHPQQERLHSPHRQHQASHSPDSS) form a disordered region.

In terms of assembly, part of the KICSTOR complex composed of KPTN, ITFG2, KICS2 and SZT2. SZT2 probably serves as a link between the other three proteins in the KICSTOR complex and may mediate the direct interaction with the GATOR complex via GATOR1. The KICSTOR complex interacts directly with the GATOR1 complex and most probably indirectly with the GATOR2 complex in an amino acid-independent manner.

Its subcellular location is the lysosome membrane. As part of the KICSTOR complex functions in the amino acid-sensing branch of the TORC1 signaling pathway. Recruits, in an amino acid-independent manner, the GATOR1 complex to the lysosomal membranes and allows its interaction with GATOR2 and the RAG GTPases. Functions upstream of the RAG GTPases and is required to negatively regulate mTORC1 signaling in absence of amino acids. In absence of the KICSTOR complex mTORC1 is constitutively localized to the lysosome and activated. The KICSTOR complex is also probably involved in the regulation of mTORC1 by glucose. In Bos taurus (Bovine), this protein is KICSTOR complex protein ITFG2.